Reading from the N-terminus, the 78-residue chain is Acyl carrier protein (78 aa).

In terms of domain architecture, Carrier spans 2 to 77 (SDIAERVKKI…DAIKFLEKNS (76 aa)). S37 bears the O-(pantetheine 4'-phosphoryl)serine mark.

It belongs to the acyl carrier protein (ACP) family. 4'-phosphopantetheine is transferred from CoA to a specific serine of apo-ACP by AcpS. This modification is essential for activity because fatty acids are bound in thioester linkage to the sulfhydryl of the prosthetic group.

Its subcellular location is the cytoplasm. The protein operates within lipid metabolism; fatty acid biosynthesis. Carrier of the growing fatty acid chain in fatty acid biosynthesis. This chain is Acyl carrier protein, found in Methylorubrum extorquens (strain CM4 / NCIMB 13688) (Methylobacterium extorquens).